A 369-amino-acid polypeptide reads, in one-letter code: Outer membrane porin F (369 aa).

A signal peptide spans 1–21 (MKRNILAVVIPALLVAGTANA). A beta stranded transmembrane segment spans residues 22 to 27 (AEIFNK). A topological domain (periplasmic) is located at residue Asp28. A beta stranded transmembrane segment spans residues 29 to 44 (GNKLDLYGKVDVRHQF). Residues 45–55 (ADKRSSEDGDD) lie on the Extracellular side of the membrane. A beta stranded transmembrane segment spans residues 56-68 (SYARIGIKGETQI). Over 69–70 (SD) the chain is Periplasmic. Residues 71–83 (QLTGFGRWEYNVK) traverse the membrane as a beta stranded segment. At 84–97 (AKGTEAAVAESSTR) the chain is on the extracellular side. A beta stranded transmembrane segment spans residues 98-106 (LAFAGLKFA). Residues 107–108 (NY) are Periplasmic-facing. Residues 109–115 (GSLDYGR) traverse the membrane as a beta stranded segment. At 116-150 (NYGVNYDVNAWTDVLPIFGGDAMAQTDNFMTGRST) the chain is on the extracellular side. Residues 151–157 (GLLTYRN) traverse the membrane as a beta stranded segment. Residues 158 to 165 (TDFFGLVD) lie on the Periplasmic side of the membrane. Residues 166–177 (GLNFALQYQGQN) form a beta stranded membrane-spanning segment. Over 178 to 193 (SDRTKNKGRDTERSNG) the chain is Extracellular. The beta stranded transmembrane segment at 194–204 (DGYGLSSTYDV) threads the bilayer. Residues 205–206 (GY) lie on the Periplasmic side of the membrane. Residues 207–219 (GITVGGSYANSAR) form a beta stranded membrane-spanning segment. Residues 220–234 (TADQKEKVSDAYGKR) lie on the Extracellular side of the membrane. The beta stranded transmembrane segment at 235–246 (AEAWNIGAKYDA) threads the bilayer. Position 247 (Asn247) is a topological domain, periplasmic. Residues 248–259 (NVYLAAMYGETR) form a beta stranded membrane-spanning segment. Topologically, residues 260–278 (NMTRYTRTIADTDATLIAN) are extracellular. The beta stranded transmembrane segment at 279–291 (KTQNIELTAQYLF) threads the bilayer. Topologically, residues 292–294 (SDL) are periplasmic. A beta stranded membrane pass occupies residues 295–308 (GLKPSLAYVQSKGK). The Extracellular segment spans residues 309–320 (DLTEGKGFNGDL). Residues 321 to 332 (VKYVSVGTYYYF) traverse the membrane as a beta stranded segment. The Periplasmic portion of the chain corresponds to 333-334 (NK). A beta stranded transmembrane segment spans residues 335-344 (NLSTYVDYKI). Residues 345–359 (NLLKKDNELGVNARN) are Extracellular-facing. Residues 360–369 (VFGVGLTYQF) traverse the membrane as a beta stranded segment.

The protein belongs to the Gram-negative porin family. As to quaternary structure, homotrimer.

The protein resides in the cell outer membrane. Functionally, forms pores that allow passive diffusion of small molecules across the outer membrane. This is Outer membrane porin F (ompF) from Xenorhabdus nematophila (strain ATCC 19061 / DSM 3370 / CCUG 14189 / LMG 1036 / NCIMB 9965 / AN6).